The sequence spans 993 residues: Vacuolar membrane protease (993 aa).

Residues 1-24 (MSPAMANPRVRKFNPIAFTPLPVT) are Cytoplasmic-facing. The chain crosses the membrane as a helical span at residues 25–45 (LITTIVYLAVLILVLVTYLVV). Topologically, residues 46 to 391 (PPAPTLEMSP…SAFAVFRLHT (346 aa)) are vacuolar. N-linked (GlcNAc...) asparagine glycosylation is found at Asn59, Asn116, and Asn119. Zn(2+)-binding residues include His175 and Asp187. Glu221 functions as the Proton acceptor in the catalytic mechanism. Residue Glu222 participates in Zn(2+) binding. Asn238 carries an N-linked (GlcNAc...) asparagine glycan. Positions 247 and 320 each coordinate Zn(2+). A helical transmembrane segment spans residues 392-412 (LFALSVTLLVSAPLVLFITSI). Topologically, residues 413–447 (ALSKTDRMYLFSMSKSLGGTSETVSLRGLRGLFRT) are cytoplasmic. The chain crosses the membrane as a helical span at residues 448–468 (PIILTVTTVITIGLAYLLEKI). Over 469–475 (NPYIVHS) the chain is Vacuolar. Residues 476-496 (SQFAVWSMMLSVWIFVAWFLA) traverse the membrane as a helical segment. The Cytoplasmic segment spans residues 497 to 509 (RVADFFRPSALHR). Residues 510-530 (AYSYTWIFIATWIMLVISTVY) form a helical membrane-spanning segment. Topologically, residues 531–534 (ANQK) are vacuolar. A helical membrane pass occupies residues 535–555 (GIAAGYFIFFYFAAVFLATWV). Topologically, residues 556–672 (SYLELFSLPR…WSWTLPRWTW (117 aa)) are cytoplasmic. Residues 579 to 621 (RRSSSLSSRLLTPSADELPSDIGPNGAENLGDPDETDPTESTS) form a disordered region. The helical transmembrane segment at 673-693 (ILQLLLLAPIVIILVGQVGLL) threads the bilayer. Topologically, residues 694 to 709 (LTTAMSQIGSDGVSTF) are vacuolar. A helical transmembrane segment spans residues 710-730 (IVYLACALLSTLLFAPLFPFI). Topologically, residues 731 to 737 (HRFTYHV) are cytoplasmic. Residues 738–758 (PTFLLLIFIGTLIYNLVAFPF) traverse the membrane as a helical segment. Residues 759–993 (SPANRLKIFF…VEASHDFIIQ (235 aa)) lie on the Vacuolar side of the membrane. N-linked (GlcNAc...) asparagine glycosylation is found at Asn806, Asn847, and Asn955.

This sequence belongs to the peptidase M28 family. Zn(2+) serves as cofactor.

The protein resides in the vacuole membrane. Functionally, may be involved in vacuolar sorting and osmoregulation. The protein is Vacuolar membrane protease of Paracoccidioides lutzii (strain ATCC MYA-826 / Pb01) (Paracoccidioides brasiliensis).